The following is a 135-amino-acid chain: Small ribosomal subunit protein eS6 (135 aa).

This sequence belongs to the eukaryotic ribosomal protein eS6 family.

This chain is Small ribosomal subunit protein eS6, found in Methanospirillum hungatei JF-1 (strain ATCC 27890 / DSM 864 / NBRC 100397 / JF-1).